Here is a 502-residue protein sequence, read N- to C-terminus: ATP synthase subunit alpha (502 aa).

Residues 115–137 (VDGLGPVETTETRPIESPAPGVM) form a disordered region. 169–176 (GDRQTGKT) contacts ATP.

Belongs to the ATPase alpha/beta chains family. In terms of assembly, F-type ATPases have 2 components, CF(1) - the catalytic core - and CF(0) - the membrane proton channel. CF(1) has five subunits: alpha(3), beta(3), gamma(1), delta(1), epsilon(1). CF(0) has three main subunits: a(1), b(2) and c(9-12). The alpha and beta chains form an alternating ring which encloses part of the gamma chain. CF(1) is attached to CF(0) by a central stalk formed by the gamma and epsilon chains, while a peripheral stalk is formed by the delta and b chains.

The protein localises to the cell membrane. It carries out the reaction ATP + H2O + 4 H(+)(in) = ADP + phosphate + 5 H(+)(out). Functionally, produces ATP from ADP in the presence of a proton gradient across the membrane. The alpha chain is a regulatory subunit. The polypeptide is ATP synthase subunit alpha (Geobacillus kaustophilus (strain HTA426)).